We begin with the raw amino-acid sequence, 142 residues long: Small ribosomal subunit protein bS6 (142 aa).

The interval 103–142 (KAAESREQRAPRGEDRPARVVADDVDDSDDDTDDEDSNDE) is disordered. Positions 105–124 (AESREQRAPRGEDRPARVVA) are enriched in basic and acidic residues. A compositionally biased stretch (acidic residues) spans 125–142 (DDVDDSDDDTDDEDSNDE).

The protein belongs to the bacterial ribosomal protein bS6 family.

Its function is as follows. Binds together with bS18 to 16S ribosomal RNA. In Hahella chejuensis (strain KCTC 2396), this protein is Small ribosomal subunit protein bS6.